A 300-amino-acid chain; its full sequence is Protoheme IX farnesyltransferase (300 aa).

9 helical membrane passes run 24-44 (VTQL…PGMV), 46-66 (WHVL…AFAI), 94-114 (PQIL…LYTF), 118-138 (LTMW…TLLL), 146-166 (IVIG…AVTG), 172-192 (AWIL…VLAL), 217-237 (LHIL…FISG), 239-259 (SGAV…AYAW), and 278-298 (IVYL…RPLL).

It belongs to the UbiA prenyltransferase family. Protoheme IX farnesyltransferase subfamily.

It is found in the cell inner membrane. It catalyses the reaction heme b + (2E,6E)-farnesyl diphosphate + H2O = Fe(II)-heme o + diphosphate. It participates in porphyrin-containing compound metabolism; heme O biosynthesis; heme O from protoheme: step 1/1. Functionally, converts heme B (protoheme IX) to heme O by substitution of the vinyl group on carbon 2 of heme B porphyrin ring with a hydroxyethyl farnesyl side group. This chain is Protoheme IX farnesyltransferase, found in Burkholderia lata (strain ATCC 17760 / DSM 23089 / LMG 22485 / NCIMB 9086 / R18194 / 383).